The primary structure comprises 156 residues: Small ribosomal subunit protein uS7 (156 aa).

This sequence belongs to the universal ribosomal protein uS7 family. In terms of assembly, part of the 30S ribosomal subunit. Contacts proteins S9 and S11.

Functionally, one of the primary rRNA binding proteins, it binds directly to 16S rRNA where it nucleates assembly of the head domain of the 30S subunit. Is located at the subunit interface close to the decoding center, probably blocks exit of the E-site tRNA. The chain is Small ribosomal subunit protein uS7 from Yersinia enterocolitica serotype O:8 / biotype 1B (strain NCTC 13174 / 8081).